Consider the following 161-residue polypeptide: MSRVCHKLEDFMRQRRIAREIALQVLYSLEVVEMEAGEAIELYWAHYEAPMDARPFSSLLIEGAWKHRDQIDSLIGGCSANWSIARMSKVDKSILRMAVFELCFCEDIPPKVTMNEAIDLGKVYGSENSGSFINGILDALYAKIHKKNDEQEIAPPPERSE.

The protein belongs to the NusB family.

In terms of biological role, involved in transcription antitermination. Required for transcription of ribosomal RNA (rRNA) genes. Binds specifically to the boxA antiterminator sequence of the ribosomal RNA (rrn) operons. The protein is Transcription antitermination protein NusB of Syntrophus aciditrophicus (strain SB).